Reading from the N-terminus, the 288-residue chain is NAD kinase (288 aa).

D70 functions as the Proton acceptor in the catalytic mechanism. NAD(+)-binding positions include 70–71, 144–145, R155, K172, D174, 185–190, and Q245; these read DG, ND, and TGYSLS.

This sequence belongs to the NAD kinase family. A divalent metal cation serves as cofactor.

The protein localises to the cytoplasm. The catalysed reaction is NAD(+) + ATP = ADP + NADP(+) + H(+). Involved in the regulation of the intracellular balance of NAD and NADP, and is a key enzyme in the biosynthesis of NADP. Catalyzes specifically the phosphorylation on 2'-hydroxyl of the adenosine moiety of NAD to yield NADP. The protein is NAD kinase of Geobacter sp. (strain M21).